A 345-amino-acid chain; its full sequence is Probable dual-specificity RNA methyltransferase RlmN (345 aa).

Residue Glu-93 is the Proton acceptor of the active site. In terms of domain architecture, Radical SAM core spans 99-326 (DDERATLCIS…TTIRASRGED (228 aa)). Residues Cys-106 and Cys-331 are joined by a disulfide bond. [4Fe-4S] cluster-binding residues include Cys-113, Cys-117, and Cys-120. Residues 158-159 (GE), Ser-190, 212-214 (SLH), and His-288 contribute to the S-adenosyl-L-methionine site. Catalysis depends on Cys-331, which acts as the S-methylcysteine intermediate.

It belongs to the radical SAM superfamily. RlmN family. The cofactor is [4Fe-4S] cluster.

The protein localises to the cytoplasm. It catalyses the reaction adenosine(2503) in 23S rRNA + 2 reduced [2Fe-2S]-[ferredoxin] + 2 S-adenosyl-L-methionine = 2-methyladenosine(2503) in 23S rRNA + 5'-deoxyadenosine + L-methionine + 2 oxidized [2Fe-2S]-[ferredoxin] + S-adenosyl-L-homocysteine. The catalysed reaction is adenosine(37) in tRNA + 2 reduced [2Fe-2S]-[ferredoxin] + 2 S-adenosyl-L-methionine = 2-methyladenosine(37) in tRNA + 5'-deoxyadenosine + L-methionine + 2 oxidized [2Fe-2S]-[ferredoxin] + S-adenosyl-L-homocysteine. Its function is as follows. Specifically methylates position 2 of adenine 2503 in 23S rRNA and position 2 of adenine 37 in tRNAs. The protein is Probable dual-specificity RNA methyltransferase RlmN of Bacteroides thetaiotaomicron (strain ATCC 29148 / DSM 2079 / JCM 5827 / CCUG 10774 / NCTC 10582 / VPI-5482 / E50).